The primary structure comprises 214 residues: Probable chemoreceptor glutamine deamidase CheD (214 aa).

It belongs to the CheD family.

The catalysed reaction is L-glutaminyl-[protein] + H2O = L-glutamyl-[protein] + NH4(+). In terms of biological role, probably deamidates glutamine residues to glutamate on methyl-accepting chemotaxis receptors (MCPs), playing an important role in chemotaxis. This Vibrio vulnificus (strain CMCP6) protein is Probable chemoreceptor glutamine deamidase CheD.